We begin with the raw amino-acid sequence, 114 residues long: Ribonuclease P protein component (114 aa).

Belongs to the RnpA family. Consists of a catalytic RNA component (M1 or rnpB) and a protein subunit.

It catalyses the reaction Endonucleolytic cleavage of RNA, removing 5'-extranucleotides from tRNA precursor.. Functionally, RNaseP catalyzes the removal of the 5'-leader sequence from pre-tRNA to produce the mature 5'-terminus. It can also cleave other RNA substrates such as 4.5S RNA. The protein component plays an auxiliary but essential role in vivo by binding to the 5'-leader sequence and broadening the substrate specificity of the ribozyme. The sequence is that of Ribonuclease P protein component from Limosilactobacillus fermentum (strain NBRC 3956 / LMG 18251) (Lactobacillus fermentum).